Reading from the N-terminus, the 174-residue chain is UPF0316 protein lin1888 (174 aa).

3 consecutive transmembrane segments (helical) span residues 4–24, 36–56, and 62–82; these read GIFIVATIFVVNILYVTIYTV, LAALSSVFEMIIYVVALSLVL, and IANVLAYAVGFGVGIIVGMKI.

It belongs to the UPF0316 family.

It is found in the cell membrane. In Listeria innocua serovar 6a (strain ATCC BAA-680 / CLIP 11262), this protein is UPF0316 protein lin1888.